An 82-amino-acid polypeptide reads, in one-letter code: Penaeidin-3e (82 aa).

Positions 1-19 (MRLVVCLVFLAPFALVCHG) are cleaved as a signal peptide. The residue at position 20 (Gln20) is a Pyrrolidone carboxylic acid. 3 disulfides stabilise this stretch: Cys51/Cys66, Cys55/Cys73, and Cys67/Cys74. Ser81 is modified (serine amide).

This sequence belongs to the penaeidin family.

It localises to the cytoplasmic granule. Antibacterial and antifungal activity. Presents chitin-binding activity. The sequence is that of Penaeidin-3e from Penaeus vannamei (Whiteleg shrimp).